The sequence spans 364 residues: Fructose-bisphosphate aldolase B (364 aa).

An N-acetylalanine modification is found at A2. K13 carries the post-translational modification N6-succinyllysine. Residue S36 is modified to Phosphoserine. At T39 the chain carries Phosphothreonine. Residue R43 participates in beta-D-fructose 1,6-bisphosphate binding. A Phosphoserine modification is found at S89. A Phosphothreonine modification is found at T119. At K121 the chain carries N6-succinyllysine. S132 carries the post-translational modification Phosphoserine. The Proton acceptor role is filled by E188. K230 serves as the catalytic Schiff-base intermediate with dihydroxyacetone-P. Phosphoserine is present on residues S272, S276, S299, and S301. 272 to 274 contacts beta-D-fructose 1,6-bisphosphate; sequence SGG. Residue R304 participates in beta-D-fructose 1,6-bisphosphate binding. Position 309 is a phosphoserine (S309). K317 is modified (N6-succinyllysine).

The protein belongs to the class I fructose-bisphosphate aldolase family. In terms of assembly, homotetramer. Interacts with BBS1, BBS2, BBS4 and BBS7. Forms a ternary complex with G6PD and TP53; this interaction is direct.

Its subcellular location is the cytoplasm. The protein resides in the cytosol. It is found in the cytoskeleton. The protein localises to the microtubule organizing center. It localises to the centrosome. Its subcellular location is the centriolar satellite. The enzyme catalyses beta-D-fructose 1,6-bisphosphate = D-glyceraldehyde 3-phosphate + dihydroxyacetone phosphate. It carries out the reaction beta-D-fructose 1-phosphate = D-glyceraldehyde + dihydroxyacetone phosphate. Its pathway is carbohydrate degradation; glycolysis; D-glyceraldehyde 3-phosphate and glycerone phosphate from D-glucose: step 4/4. The protein operates within carbohydrate biosynthesis; gluconeogenesis. It functions in the pathway carbohydrate metabolism; fructose metabolism. Functionally, catalyzes the aldol cleavage of fructose 1,6-biphosphate to form two triosephosphates dihydroxyacetone phosphate and D-glyceraldehyde 3-phosphate in glycolysis as well as the reverse stereospecific aldol addition reaction in gluconeogenesis. In fructolysis, metabolizes fructose 1-phosphate derived from the phosphorylation of dietary fructose by fructokinase into dihydroxyacetone phosphate and D-glyceraldehyde. Acts as an adapter independently of its enzymatic activity, exerts a tumor suppressor role by stabilizing the ternary complex with G6PD and TP53 to inhibit G6PD activity and keep oxidative pentose phosphate metabolism in check. The protein is Fructose-bisphosphate aldolase B of Homo sapiens (Human).